The sequence spans 906 residues: Ribonucleoside-diphosphate reductase large subunit-like protein (906 aa).

2 disordered regions span residues 1-70 (MNPA…AGNT) and 89-129 (VSWR…LSTF). Positions 98–109 (PDGTPSVLSLTR) are enriched in polar residues.

It belongs to the ribonucleoside diphosphate reductase large chain family.

The protein localises to the virion. It is found in the host cytoplasm. Does not possess a ribonucleotide reductase activity. Betaherpesviruses probably use another strategy to expand the dNTP pool in a quiescent host cell. The sequence is that of Ribonucleoside-diphosphate reductase large subunit-like protein from Human cytomegalovirus (strain AD169) (HHV-5).